Consider the following 345-residue polypeptide: Dihydroorotate dehydrogenase (quinone) (345 aa).

FMN contacts are provided by residues A65 to K69 and T89. K69 serves as a coordination point for substrate. N114–F118 contributes to the substrate binding site. Positions 142 and 175 each coordinate FMN. N175 serves as a coordination point for substrate. S178 serves as the catalytic Nucleophile. Residue N180 coordinates substrate. FMN contacts are provided by K220 and T248. N249–T250 lines the substrate pocket. FMN is bound by residues G271, G300, and Y321 to T322.

The protein belongs to the dihydroorotate dehydrogenase family. Type 2 subfamily. Monomer. The cofactor is FMN.

It is found in the cell membrane. It carries out the reaction (S)-dihydroorotate + a quinone = orotate + a quinol. Its pathway is pyrimidine metabolism; UMP biosynthesis via de novo pathway; orotate from (S)-dihydroorotate (quinone route): step 1/1. Its function is as follows. Catalyzes the conversion of dihydroorotate to orotate with quinone as electron acceptor. This chain is Dihydroorotate dehydrogenase (quinone), found in Burkholderia cenocepacia (strain HI2424).